The sequence spans 225 residues: uncharacterized protein (225 aa).

This is an uncharacterized protein from Mycoplasma pneumoniae (strain ATCC 29342 / M129 / Subtype 1) (Mycoplasmoides pneumoniae).